The following is a 754-amino-acid chain: Protein neuralized (754 aa).

An NHR 1 domain is found at 106 to 260; that stretch reads PLQFHSVHGD…NCTGIEFLDS (155 aa). The span at 280 to 297 shows a compositional bias: low complexity; the sequence is QQQQMPQPAANASSALNS. The tract at residues 280–308 is disordered; the sequence is QQQQMPQPAANASSALNSHHPHQQSRRSL. 2 positions are modified to phosphoserine: serine 338 and serine 341. Residues 368-523 form the NHR 2 domain; sequence PVPFHNTKGR…STQSLRMFRQ (156 aa). The RING-type zinc finger occupies 701–742; it reads CTICYENPIDSVLYMCGHMCMCYDCAIEQWRGVGGGQCPLCR.

Its subcellular location is the nucleus. Involved in neurogenesis. Interacts with other neurogenic proteins in the specification of the neuroblast versus epidermoblast cell fate. This is Protein neuralized (neur) from Drosophila melanogaster (Fruit fly).